A 500-amino-acid chain; its full sequence is Aspartyl/glutamyl-tRNA(Asn/Gln) amidotransferase subunit B (500 aa).

The protein belongs to the GatB/GatE family. GatB subfamily. As to quaternary structure, heterotrimer of A, B and C subunits.

The catalysed reaction is L-glutamyl-tRNA(Gln) + L-glutamine + ATP + H2O = L-glutaminyl-tRNA(Gln) + L-glutamate + ADP + phosphate + H(+). It carries out the reaction L-aspartyl-tRNA(Asn) + L-glutamine + ATP + H2O = L-asparaginyl-tRNA(Asn) + L-glutamate + ADP + phosphate + 2 H(+). Its function is as follows. Allows the formation of correctly charged Asn-tRNA(Asn) or Gln-tRNA(Gln) through the transamidation of misacylated Asp-tRNA(Asn) or Glu-tRNA(Gln) in organisms which lack either or both of asparaginyl-tRNA or glutaminyl-tRNA synthetases. The reaction takes place in the presence of glutamine and ATP through an activated phospho-Asp-tRNA(Asn) or phospho-Glu-tRNA(Gln). This is Aspartyl/glutamyl-tRNA(Asn/Gln) amidotransferase subunit B from Sinorhizobium medicae (strain WSM419) (Ensifer medicae).